The sequence spans 187 residues: UPF0301 protein Pcryo_0062 (187 aa).

It belongs to the UPF0301 (AlgH) family.

This is UPF0301 protein Pcryo_0062 from Psychrobacter cryohalolentis (strain ATCC BAA-1226 / DSM 17306 / VKM B-2378 / K5).